A 218-amino-acid chain; its full sequence is ATP-dependent dethiobiotin synthetase BioD (218 aa).

10–15 (NAGKTT) is an ATP binding site. Thr-14 is a Mg(2+) binding site. Lys-35 is an active-site residue. Residue Thr-39 coordinates substrate. Positions 52 and 116 each coordinate Mg(2+). ATP-binding positions include 116–119 (EGAG) and 176–177 (LR).

It belongs to the dethiobiotin synthetase family. Homodimer. Mg(2+) is required as a cofactor.

Its subcellular location is the cytoplasm. The catalysed reaction is (7R,8S)-7,8-diammoniononanoate + CO2 + ATP = (4R,5S)-dethiobiotin + ADP + phosphate + 3 H(+). It participates in cofactor biosynthesis; biotin biosynthesis; biotin from 7,8-diaminononanoate: step 1/2. Its function is as follows. Catalyzes a mechanistically unusual reaction, the ATP-dependent insertion of CO2 between the N7 and N8 nitrogen atoms of 7,8-diaminopelargonic acid (DAPA, also called 7,8-diammoniononanoate) to form a ureido ring. The chain is ATP-dependent dethiobiotin synthetase BioD from Helicobacter pylori (strain Shi470).